Consider the following 203-residue polypeptide: Glycerol-3-phosphate acyltransferase (203 aa).

Transmembrane regions (helical) follow at residues Thr-13–Thr-33, Thr-66–Val-86, Ala-88–Phe-108, Ile-118–Ala-138, and Ile-156–Met-176.

It belongs to the PlsY family. Probably interacts with PlsX.

Its subcellular location is the cell inner membrane. It carries out the reaction an acyl phosphate + sn-glycerol 3-phosphate = a 1-acyl-sn-glycero-3-phosphate + phosphate. Its pathway is lipid metabolism; phospholipid metabolism. Functionally, catalyzes the transfer of an acyl group from acyl-phosphate (acyl-PO(4)) to glycerol-3-phosphate (G3P) to form lysophosphatidic acid (LPA). This enzyme utilizes acyl-phosphate as fatty acyl donor, but not acyl-CoA or acyl-ACP. This is Glycerol-3-phosphate acyltransferase from Sinorhizobium medicae (strain WSM419) (Ensifer medicae).